A 43-amino-acid chain; its full sequence is Cuticle protein CP434 (43 aa).

2 repeat units span residues 1-18 and 25-42.

Calcified shell.

The polypeptide is Cuticle protein CP434 (Cancer pagurus (Rock crab)).